The sequence spans 449 residues: MPLFAIGLNHDSAPVAVRESLAFNAEALGDALQSARSETGADEVAILSTCNRTEIYIRLPHTDPEVVIGWLTRHQRVDLRKVRPHLYVRRSTEAMRHLMRVSAGLDSLVLGEPQILGQVKDAYHKAANAGCLGAVLERLFQHAFAVAKQVRTDTDIGSNPISVAFAAVTMAKQIFDDFPKRTAVLVGAGETIELVARHLGQQGIGQVLVANRNVERAKRLAEAHDGEAMSLNDLPRRLPEADVVVSSTGSSLPILGKGTVERAVRARRHKPMFMLDLAVPRDIEPEAGEMDDVYLYTVDDLRGVVAENMRSRQDAATQAEAIVEQQVRHYLEWRRARDAGEAIRSFRSRAESYARATRAQAARQLSRGEDPFEVIEWLTHTLTRRLVHAPTVGLRAAAATGDRTRIQHALETLAIDQQLVERSSEGDDSQQAGADGGAARGDRRAAGGS.

Substrate is bound by residues 49–52, S107, 112–114, and Q118; these read TCNR and EPQ. C50 acts as the Nucleophile in catalysis. 187–192 serves as a coordination point for NADP(+); that stretch reads GAGETI. Residues 418–449 form a disordered region; it reads QLVERSSEGDDSQQAGADGGAARGDRRAAGGS. A compositionally biased stretch (basic and acidic residues) spans 440 to 449; that stretch reads RGDRRAAGGS.

Belongs to the glutamyl-tRNA reductase family. Homodimer.

It carries out the reaction (S)-4-amino-5-oxopentanoate + tRNA(Glu) + NADP(+) = L-glutamyl-tRNA(Glu) + NADPH + H(+). It functions in the pathway porphyrin-containing compound metabolism; protoporphyrin-IX biosynthesis; 5-aminolevulinate from L-glutamyl-tRNA(Glu): step 1/2. In terms of biological role, catalyzes the NADPH-dependent reduction of glutamyl-tRNA(Glu) to glutamate 1-semialdehyde (GSA). The sequence is that of Glutamyl-tRNA reductase from Halorhodospira halophila (strain DSM 244 / SL1) (Ectothiorhodospira halophila (strain DSM 244 / SL1)).